Consider the following 858-residue polypeptide: Leucine--tRNA ligase (858 aa).

The 'HIGH' region signature appears at 42–52 (PYPSGRLHMGH). The 'KMSKS' region signature appears at 618 to 622 (KMSKS). Lys-621 contributes to the ATP binding site.

The protein belongs to the class-I aminoacyl-tRNA synthetase family.

It localises to the cytoplasm. The catalysed reaction is tRNA(Leu) + L-leucine + ATP = L-leucyl-tRNA(Leu) + AMP + diphosphate. This is Leucine--tRNA ligase from Aliivibrio fischeri (strain ATCC 700601 / ES114) (Vibrio fischeri).